We begin with the raw amino-acid sequence, 249 residues long: Small ribosomal subunit protein uS2 (249 aa).

This sequence belongs to the universal ribosomal protein uS2 family.

This is Small ribosomal subunit protein uS2 from Chlorobaculum tepidum (strain ATCC 49652 / DSM 12025 / NBRC 103806 / TLS) (Chlorobium tepidum).